Reading from the N-terminus, the 271-residue chain is Ribosomal RNA small subunit methyltransferase A (271 aa).

Residues Asn19, Leu21, Gly46, Glu67, Asp92, and Asn113 each contribute to the S-adenosyl-L-methionine site.

The protein belongs to the class I-like SAM-binding methyltransferase superfamily. rRNA adenine N(6)-methyltransferase family. RsmA subfamily.

The protein resides in the cytoplasm. It catalyses the reaction adenosine(1518)/adenosine(1519) in 16S rRNA + 4 S-adenosyl-L-methionine = N(6)-dimethyladenosine(1518)/N(6)-dimethyladenosine(1519) in 16S rRNA + 4 S-adenosyl-L-homocysteine + 4 H(+). Its function is as follows. Specifically dimethylates two adjacent adenosines (A1518 and A1519) in the loop of a conserved hairpin near the 3'-end of 16S rRNA in the 30S particle. May play a critical role in biogenesis of 30S subunits. This chain is Ribosomal RNA small subunit methyltransferase A, found in Photobacterium profundum (strain SS9).